Reading from the N-terminus, the 413-residue chain is Serine hydroxymethyltransferase (413 aa).

Residues leucine 117 and 121–123 (GHL) each bind (6S)-5,6,7,8-tetrahydrofolate. Position 226 is an N6-(pyridoxal phosphate)lysine (lysine 226). A (6S)-5,6,7,8-tetrahydrofolate-binding site is contributed by 349–351 (SPF).

The protein belongs to the SHMT family. In terms of assembly, homodimer. Pyridoxal 5'-phosphate is required as a cofactor.

The protein localises to the cytoplasm. It carries out the reaction (6R)-5,10-methylene-5,6,7,8-tetrahydrofolate + glycine + H2O = (6S)-5,6,7,8-tetrahydrofolate + L-serine. It functions in the pathway one-carbon metabolism; tetrahydrofolate interconversion. It participates in amino-acid biosynthesis; glycine biosynthesis; glycine from L-serine: step 1/1. Its function is as follows. Catalyzes the reversible interconversion of serine and glycine with tetrahydrofolate (THF) serving as the one-carbon carrier. This reaction serves as the major source of one-carbon groups required for the biosynthesis of purines, thymidylate, methionine, and other important biomolecules. Also exhibits THF-independent aldolase activity toward beta-hydroxyamino acids, producing glycine and aldehydes, via a retro-aldol mechanism. This is Serine hydroxymethyltransferase from Listeria monocytogenes serovar 1/2a (strain ATCC BAA-679 / EGD-e).